We begin with the raw amino-acid sequence, 223 residues long: Pyridoxal phosphate homeostasis protein (223 aa).

Residue lysine 36 is modified to N6-(pyridoxal phosphate)lysine.

This sequence belongs to the pyridoxal phosphate-binding protein YggS/PROSC family. Monomer.

Pyridoxal 5'-phosphate (PLP)-binding protein, which is involved in PLP homeostasis. The protein is Pyridoxal phosphate homeostasis protein of Buchnera aphidicola subsp. Baizongia pistaciae (strain Bp).